A 605-amino-acid polypeptide reads, in one-letter code: NADH-ubiquinone oxidoreductase chain 5 (605 aa).

15 consecutive transmembrane segments (helical) span residues 8–28 (TLLSLLILTVPIMASNFYPYT), 34–54 (IYVKTMVSYAFLVSLIPTMIF), 87–107 (MILMPVALSVTWSIMEFSMWY), 117–137 (FFKYLLLFLITMMLLVTANNL), 140–160 (LFIGWEGVGIMSFLLIGWWYG), 171–191 (AILYNRIGDVGFLVAMAWFLF), 241–261 (TPVSALLHSSTMVVAGIFLLI), 273–293 (IQTMMLCLGAITTLFTAICAL), 301–321 (IVAFSTSSQLGLMMVTVGINQ), 324–344 (LAFLHICTHAFFKAMLFLCSG), 366–386 (LPFTTTALITGSLALTGMPFL), 409–429 (LFITLIATSLTAVYSTRIIYF), 457–477 (LLVGSIFAGFFISNNITPTTI), 482–502 (MPTYLKTTAMLVTLLGFIVAL), and 584–604 (IKLYFLSFLITLTLSLIMLNF).

The protein belongs to the complex I subunit 5 family. Core subunit of respiratory chain NADH dehydrogenase (Complex I) which is composed of 45 different subunits.

Its subcellular location is the mitochondrion inner membrane. It catalyses the reaction a ubiquinone + NADH + 5 H(+)(in) = a ubiquinol + NAD(+) + 4 H(+)(out). Core subunit of the mitochondrial membrane respiratory chain NADH dehydrogenase (Complex I) which catalyzes electron transfer from NADH through the respiratory chain, using ubiquinone as an electron acceptor. Essential for the catalytic activity and assembly of complex I. The chain is NADH-ubiquinone oxidoreductase chain 5 (MT-ND5) from Rousettus amplexicaudatus (Common rousette).